The sequence spans 411 residues: 2,3-bisphosphoglycerate-independent phosphoglycerate mutase (411 aa).

It belongs to the BPG-independent phosphoglycerate mutase family. A-PGAM subfamily.

It carries out the reaction (2R)-2-phosphoglycerate = (2R)-3-phosphoglycerate. Its pathway is carbohydrate degradation; glycolysis; pyruvate from D-glyceraldehyde 3-phosphate: step 3/5. In terms of biological role, catalyzes the interconversion of 2-phosphoglycerate and 3-phosphoglycerate. This chain is 2,3-bisphosphoglycerate-independent phosphoglycerate mutase, found in Pyrobaculum aerophilum (strain ATCC 51768 / DSM 7523 / JCM 9630 / CIP 104966 / NBRC 100827 / IM2).